The sequence spans 658 residues: Glycogen debranching enzyme (658 aa).

D336 (nucleophile) is an active-site residue. The Proton donor role is filled by E371. Positions 459 to 484 are disordered; that stretch reads EANGEENRDGTNSNYSDNHGKEGLGG.

Belongs to the glycosyl hydrolase 13 family.

It catalyses the reaction Hydrolysis of (1-&gt;6)-alpha-D-glucosidic linkages to branches with degrees of polymerization of three or four glucose residues in limit dextrin.. It participates in glycan degradation; glycogen degradation. In terms of biological role, removes maltotriose and maltotetraose chains that are attached by 1,6-alpha-linkage to the limit dextrin main chain, generating a debranched limit dextrin. This is Glycogen debranching enzyme from Salmonella dublin (strain CT_02021853).